The chain runs to 239 residues: Putative 3-methyladenine DNA glycosylase (239 aa).

The protein belongs to the DNA glycosylase MPG family.

The polypeptide is Putative 3-methyladenine DNA glycosylase (Pseudomonas aeruginosa (strain UCBPP-PA14)).